Here is a 520-residue protein sequence, read N- to C-terminus: Calcium and calcium/calmodulin-dependent serine/threonine-protein kinase (520 aa).

Residues 13–302 (YEVVDVLGKG…ANDLLKHPWV (290 aa)) form the Protein kinase domain. ATP contacts are provided by residues 19–27 (LGKGGFSVV) and Lys44. Residue Asp167 is the Proton acceptor of the active site. A helical membrane pass occupies residues 227-243 (MWSLGVILYILLSGCPP). Position 267 is a phosphothreonine; by autocatalysis (Thr267). Residues 325-338 (ARRKLRAAAIASVL) are calmodulin-binding. Residues 346–368 (TKKLKNLLGSHDMKSEELENLRA) adopt a coiled-coil conformation. EF-hand domains lie at 361-395 (EELE…MKMN), 396-431 (SLIP…LRNS), 432-467 (QGDD…LPED), and 474-509 (TEPG…DSSL). The Ca(2+) site is built by Asp409, Asn411, Asp413, Thr415, Glu420, Asp445, Asp447, Ser449, Cys451, Glu456, Asp487, Asn489, Asp491, and Glu498.

The protein belongs to the protein kinase superfamily. CAMK Ser/Thr protein kinase family. CaMK subfamily. Autophosphorylation stimulated by calcium and inhibited by calcium/calmodulin. Occurs probably by an intermolecular mechanism.

It is found in the membrane. The catalysed reaction is L-seryl-[protein] + ATP = O-phospho-L-seryl-[protein] + ADP + H(+). The enzyme catalyses L-threonyl-[protein] + ATP = O-phospho-L-threonyl-[protein] + ADP + H(+). With respect to regulation, activated by calcium/calmodulin binding after calcium-induced autophosphorylation. Autophosphorylation is associated with a time-dependent loss of kinase activity sensitive to reaction pH and ATP concentration. In vitro inactivation leads to the formation of network-like structures. Protein kinase that may be involved in microsporogenesis. The protein is Calcium and calcium/calmodulin-dependent serine/threonine-protein kinase (CCAMK) of Lilium longiflorum (Trumpet lily).